A 293-amino-acid chain; its full sequence is Histone H3-like centromeric protein CSE4 (293 aa).

Acidic residues predominate over residues 132–141; the sequence is QDLSYDESDY. Positions 132-169 are disordered; it reads QDLSYDESDYSDPLQEIDSNYRESPRRTTDKILKSSSK. A compositionally biased stretch (basic and acidic residues) spans 150–164; the sequence is SNYRESPRRTTDKIL. Residues 157–291 form an H3-like region; the sequence is RRTTDKILKS…VQLARRIRGQ (135 aa).

This sequence belongs to the histone H3 family. In terms of assembly, component of centromeric nucleosomes, where DNA is wrapped around a histone octamer core. The octamer contains two molecules each of H2A, H2B, CSE4/CENPA and H4 assembled in one CSE4-H4 heterotetramer and two H2A-H2B heterodimers. Interacts with the inner kinetochore. Ubiquitinated. Is degraded through ubiquitin-mediated proteolysis when not protected by its association to the kinetochore.

The protein localises to the nucleus. Its subcellular location is the chromosome. It localises to the centromere. Its function is as follows. Histone H3-like nucleosomal protein that is specifically found in centromeric nucleosomes. Replaces conventional H3 in the nucleosome core of centromeric chromatin that serves as an assembly site for the inner kinetochore. Required for recruitment and assembly of kinetochore proteins, mitotic progression and chromosome segregation. May serve as an epigenetic mark that propagates centromere identity through replication and cell division. This chain is Histone H3-like centromeric protein CSE4 (CSE4), found in Monosporozyma servazzii (Yeast).